Here is a 174-residue protein sequence, read N- to C-terminus: Adipose-secreted signaling protein (174 aa).

The residue at position 2 (Ala-2) is an N-acetylalanine. Position 147 is a phosphothreonine (Thr-147).

It belongs to the ADISSP family. In terms of tissue distribution, expression is adipose-specific and highly brown adipose tissue-enriched.

It is found in the secreted. Its function is as follows. Adipocyte-secreted protein (adipokine) that acts as a key regulator for white adipose tissue (WAT) thermogenesis and glucose homeostasis at least in part through activation of protein kinase A (PKA). The protein is Adipose-secreted signaling protein of Mus musculus (Mouse).